The primary structure comprises 148 residues: Large ribosomal subunit protein bL9 (148 aa).

It belongs to the bacterial ribosomal protein bL9 family.

Its function is as follows. Binds to the 23S rRNA. This is Large ribosomal subunit protein bL9 from Aeromonas salmonicida (strain A449).